The sequence spans 241 residues: Fatty acid metabolism regulator protein (241 aa).

The 69-residue stretch at 11 to 79 folds into the HTH gntR-type domain; it reads QSPAGLAEEY…HGKPTKVNNI (69 aa). The H-T-H motif DNA-binding region spans 39–58; that stretch reads ERELAEKIGVTRTTLREVLQ.

As to quaternary structure, homodimer.

Its subcellular location is the cytoplasm. Functionally, multifunctional regulator of fatty acid metabolism. This is Fatty acid metabolism regulator protein from Pasteurella multocida (strain Pm70).